A 540-amino-acid chain; its full sequence is MARKQNRNSKELGLVPLTDDTSHAGPPGPGRALLECDHLRSGVPGGRRRKDWSCSLLVASLAGAFGSSFLYGYNLSVVNAPTPYIKAFYNESWERRHGRPIDPDTLTLLWSVTVSIFAIGGLVGTLIVKMIGKVLGRKHTLLANNGFAISAALLMACSLQAGAFEMLIVGRFIMGIDGGVALSVLPMYLSEISPKEIRGSLGQVTAIFICIGVFTGQLLGLPELLGKESTWPYLFGVIVVPAVVQLLSLPFLPDSPRYLLLEKHNEARAVKAFQTFLGKADVSQEVEEVLAESRVQRSIRLVSVLELLRAPYVRWQVVTVIVTMACYQLCGLNAIWFYTNSIFGKAGIPPAKIPYVTLSTGGIETLAAVFSGLVIEHLGRRPLLIGGFGLMGLFFGTLTITLTLQDHAPWVPYLSIVGILAIIASFCSGPGGIPFILTGEFFQQSQRPAAFIIAGTVNWLSNFAVGLLFPFIQKSLDTYCFLVFATICITGAIYLYFVLPETKNRTYAEISQAFSKRNKAYPPEEKIDSAVTDGKINGRP.

Residues 1-31 (MARKQNRNSKELGLVPLTDDTSHAGPPGPGR) are disordered. The Cytoplasmic segment spans residues 1–51 (MARKQNRNSKELGLVPLTDDTSHAGPPGPGRALLECDHLRSGVPGGRRRKD). S9 is modified (phosphoserine). Residues 52–72 (WSCSLLVASLAGAFGSSFLYG) traverse the membrane as a helical segment. Over 73–107 (YNLSVVNAPTPYIKAFYNESWERRHGRPIDPDTLT) the chain is Extracellular. A glycan (N-linked (GlcNAc...) asparagine) is linked at N90. A helical transmembrane segment spans residues 108–128 (LLWSVTVSIFAIGGLVGTLIV). The Cytoplasmic portion of the chain corresponds to 129–140 (KMIGKVLGRKHT). The helical transmembrane segment at 141 to 161 (LLANNGFAISAALLMACSLQA) threads the bilayer. Over 162–171 (GAFEMLIVGR) the chain is Extracellular. The chain crosses the membrane as a helical span at residues 172–192 (FIMGIDGGVALSVLPMYLSEI). The Cytoplasmic portion of the chain corresponds to 193–200 (SPKEIRGS). Residues 201-221 (LGQVTAIFICIGVFTGQLLGL) traverse the membrane as a helical segment. Residues 222-231 (PELLGKESTW) lie on the Extracellular side of the membrane. Residues 232–252 (PYLFGVIVVPAVVQLLSLPFL) form a helical membrane-spanning segment. Residues 253 to 316 (PDSPRYLLLE…LLRAPYVRWQ (64 aa)) are Cytoplasmic-facing. A helical membrane pass occupies residues 317–337 (VVTVIVTMACYQLCGLNAIWF). At 338–354 (YTNSIFGKAGIPPAKIP) the chain is on the extracellular side. A helical membrane pass occupies residues 355 to 375 (YVTLSTGGIETLAAVFSGLVI). Residues 376-381 (EHLGRR) lie on the Cytoplasmic side of the membrane. The chain crosses the membrane as a helical span at residues 382–402 (PLLIGGFGLMGLFFGTLTITL). The Extracellular portion of the chain corresponds to 403-415 (TLQDHAPWVPYLS). The chain crosses the membrane as a helical span at residues 416–436 (IVGILAIIASFCSGPGGIPFI). Topologically, residues 437–451 (LTGEFFQQSQRPAAF) are cytoplasmic. A helical membrane pass occupies residues 452–472 (IIAGTVNWLSNFAVGLLFPFI). At 473–478 (QKSLDT) the chain is on the extracellular side. A helical transmembrane segment spans residues 479–499 (YCFLVFATICITGAIYLYFVL). Over 500–540 (PETKNRTYAEISQAFSKRNKAYPPEEKIDSAVTDGKINGRP) the chain is Cytoplasmic. Phosphoserine is present on S515. Residues 519–540 (KAYPPEEKIDSAVTDGKINGRP) are disordered.

It belongs to the major facilitator superfamily. Sugar transporter (TC 2.A.1.1) family. Glucose transporter subfamily. As to expression, most strongly expressed in basolateral membranes of proximal renal tubular cells, liver and placenta. Also detected in lung, blood leukocytes, heart skeletal muscle and chondrocytes from articular cartilage. Detected in kidney membrane (at protein level). Only detected in the apical membranes of polarized renal tubular cells and placenta. Detected in kidney membrane (at protein level).

Its subcellular location is the cell membrane. It localises to the basolateral cell membrane. It is found in the apical cell membrane. The enzyme catalyses urate(out) = urate(in). With respect to regulation, extracellular glucose and urate accelerate urate efflux. Intracellular urate, glucose and fructose accelerate urate influx. No effect of extracellular urate, glucose or fructose on urate efflux. Intracellular urate and fructose slightly accelerate urate influx. Its function is as follows. High-capacity urate transporter, which may play a role in the urate reabsorption by proximal tubules. May have a residual high-affinity, low-capacity glucose and fructose transporter activity. Transports urate at rates 45- to 60-fold faster than glucose. Does not transport galactose. May mediate small uptake of adenine but not of other nucleobases. The chain is Solute carrier family 2, facilitated glucose transporter member 9 from Homo sapiens (Human).